A 503-amino-acid chain; its full sequence is Hexose transporter 1 (503 aa).

At 1–26 the chain is on the cytoplasmic side; that stretch reads MKKSSKEISPSQSLKNGGSDHFFNTS. Residues 27–47 form a helical membrane-spanning segment; sequence LMYVLAACLASFIFGYQVSVL. Topologically, residues 48-76 are extracellular; it reads NTIKNFIVIEFGWCTGNKVECDDSTLKSS. A disulfide bridge connects residues cysteine 61 and cysteine 68. Residues 77–97 form a helical membrane-spanning segment; the sequence is FLLASVFIGAVVGSGFSDYLV. The Cytoplasmic portion of the chain corresponds to 98–102; that stretch reads QHGRR. The helical transmembrane segment at 103 to 123 threads the bilayer; that stretch reads FSLLVIYNFFILVSILTSITH. Over 124–132 the chain is Extracellular; it reads HFHTILFSR. Residues 133–153 form a helical membrane-spanning segment; the sequence is LLSGFGVGLITVSVPMYISEM. Residues 154-163 lie on the Cytoplasmic side of the membrane; sequence THKDKKGAYG. The helical transmembrane segment at 164–184 threads the bilayer; it reads VLHQLFITFGILVAVLLGMAM. Glutamine 167 lines the alpha-D-glucose pocket. Glutamine 167 provides a ligand contact to beta-D-glucose. Residues 185 to 205 lie on the Extracellular side of the membrane; it reads GEAPDAKSVDALGEFQKIWWR. The helical transmembrane segment at 206 to 226 threads the bilayer; sequence LMFFFPCLISILGIVLLTFFY. At 227-291 the chain is on the cytoplasmic side; sequence KEETPYYLFE…RAMQIPSYRN (65 aa). Residues 292–312 form a helical membrane-spanning segment; that stretch reads VILLGCILSGLQQFTGINVLV. Alpha-D-glucose-binding residues include glutamine 303, glutamine 304, and asparagine 309. Beta-D-glucose is bound at residue glutamine 303. Position 309 (asparagine 309) interacts with beta-D-glucose. At 313-329 the chain is on the extracellular side; the sequence is SNSNELYKEFLSNKLIT. Residues 330–350 traverse the membrane as a helical segment; the sequence is TLSVIMTVVNFLMTFPAIYIV. Asparagine 339 provides a ligand contact to beta-D-glucose. Over 351–356 the chain is Cytoplasmic; the sequence is EKLGRK. Residues 357-377 form a helical membrane-spanning segment; it reads TLLLCGCAGVTLAAFLPTAIA. Over 378–391 the chain is Extracellular; it reads NQIDRSSDLVRNLS. A helical membrane pass occupies residues 392–412; the sequence is IAATFVMIISFAVSYGPVLWI. An alpha-D-glucose-binding site is contributed by tryptophan 411. Residues 413-428 are Cytoplasmic-facing; sequence YLHEMFPSEIKDSAAS. A helical membrane pass occupies residues 429–449; it reads LASLVNWVCAIIVVFPSDIII. Residues 450–454 are Extracellular-facing; sequence KKSPT. The helical transmembrane segment at 455-475 threads the bilayer; the sequence is ILFFIFSGMSILSFLFIFFFI. Residues 476 to 503 lie on the Cytoplasmic side of the membrane; sequence KETKGGEIGTSPYITMEERQKHMGKSAV.

The protein belongs to the major facilitator superfamily. Sugar transporter (TC 2.A.1.1) family. As to quaternary structure, homodimer.

The protein resides in the cell membrane. The enzyme catalyses D-glucose(out) = D-glucose(in). It carries out the reaction D-fructose(out) = D-fructose(in). The catalysed reaction is D-galactose(in) = D-galactose(out). It catalyses the reaction D-mannose(out) = D-mannose(in). The enzyme catalyses D-glucosamine(out) = D-glucosamine(in). It carries out the reaction D-xylose(out) = D-xylose(in). Inhibited by compound 3361 (3-O-((undec-10-en)-1-yl)-D-glucose). In terms of biological role, sodium-independent facilitative hexose transporter. Can transport D-glucose and D-fructose. Can transport D-mannose, D-galactose, D-xylose and D-glucosamine. This Plasmodium vivax protein is Hexose transporter 1.